The primary structure comprises 422 residues: uncharacterized protein (422 aa).

A phosphoserine mark is found at Ser124, Ser126, and Ser151. The interval 144–166 (TNSLNHDSPPSTPPRRPDTSTSK) is disordered. A Glycyl lysine isopeptide (Lys-Gly) (interchain with G-Cter in SUMO2) cross-link involves residue Lys250. Disordered stretches follow at residues 251 to 285 (ADTT…NDSS) and 299 to 324 (GRGP…ATTA). Acidic residues predominate over residues 271–282 (ETDEDLAWDSDN). 2 positions are modified to phosphoserine: Ser280 and Ser306. Positions 310-324 (ALTVKAKATSSATTA) are enriched in low complexity. Position 351 is a phosphoserine (Ser351).

This is an uncharacterized protein from Homo sapiens (Human).